We begin with the raw amino-acid sequence, 289 residues long: 4-hydroxy-3-methylbut-2-enyl diphosphate reductase (289 aa).

Cysteine 13 is a [4Fe-4S] cluster binding site. Positions 42 and 76 each coordinate (2E)-4-hydroxy-3-methylbut-2-enyl diphosphate. Histidine 42 and histidine 76 together coordinate dimethylallyl diphosphate. Histidine 42 and histidine 76 together coordinate isopentenyl diphosphate. Cysteine 98 is a [4Fe-4S] cluster binding site. A (2E)-4-hydroxy-3-methylbut-2-enyl diphosphate-binding site is contributed by histidine 130. Histidine 130 serves as a coordination point for dimethylallyl diphosphate. An isopentenyl diphosphate-binding site is contributed by histidine 130. Glutamate 132 (proton donor) is an active-site residue. Threonine 168 contacts (2E)-4-hydroxy-3-methylbut-2-enyl diphosphate. Residue cysteine 199 coordinates [4Fe-4S] cluster. (2E)-4-hydroxy-3-methylbut-2-enyl diphosphate-binding residues include serine 227, serine 228, asparagine 229, and serine 272. Residues serine 227, serine 228, asparagine 229, and serine 272 each contribute to the dimethylallyl diphosphate site. 4 residues coordinate isopentenyl diphosphate: serine 227, serine 228, asparagine 229, and serine 272.

It belongs to the IspH family. Requires [4Fe-4S] cluster as cofactor.

It catalyses the reaction isopentenyl diphosphate + 2 oxidized [2Fe-2S]-[ferredoxin] + H2O = (2E)-4-hydroxy-3-methylbut-2-enyl diphosphate + 2 reduced [2Fe-2S]-[ferredoxin] + 2 H(+). It carries out the reaction dimethylallyl diphosphate + 2 oxidized [2Fe-2S]-[ferredoxin] + H2O = (2E)-4-hydroxy-3-methylbut-2-enyl diphosphate + 2 reduced [2Fe-2S]-[ferredoxin] + 2 H(+). It participates in isoprenoid biosynthesis; dimethylallyl diphosphate biosynthesis; dimethylallyl diphosphate from (2E)-4-hydroxy-3-methylbutenyl diphosphate: step 1/1. It functions in the pathway isoprenoid biosynthesis; isopentenyl diphosphate biosynthesis via DXP pathway; isopentenyl diphosphate from 1-deoxy-D-xylulose 5-phosphate: step 6/6. Its function is as follows. Catalyzes the conversion of 1-hydroxy-2-methyl-2-(E)-butenyl 4-diphosphate (HMBPP) into a mixture of isopentenyl diphosphate (IPP) and dimethylallyl diphosphate (DMAPP). Acts in the terminal step of the DOXP/MEP pathway for isoprenoid precursor biosynthesis. In Porphyromonas gingivalis (strain ATCC BAA-308 / W83), this protein is 4-hydroxy-3-methylbut-2-enyl diphosphate reductase.